The chain runs to 286 residues: Pantothenate synthetase (286 aa).

30 to 37 is an ATP binding site; the sequence is MGNLHDGH. H37 (proton donor) is an active-site residue. Residue Q61 coordinates (R)-pantoate. Residue Q61 coordinates beta-alanine. 149-152 is a binding site for ATP; sequence GEKD. Residue Q155 participates in (R)-pantoate binding. ATP is bound by residues V178 and 186–189; that span reads LSSR.

The protein belongs to the pantothenate synthetase family. Homodimer.

It localises to the cytoplasm. The enzyme catalyses (R)-pantoate + beta-alanine + ATP = (R)-pantothenate + AMP + diphosphate + H(+). Its pathway is cofactor biosynthesis; (R)-pantothenate biosynthesis; (R)-pantothenate from (R)-pantoate and beta-alanine: step 1/1. In terms of biological role, catalyzes the condensation of pantoate with beta-alanine in an ATP-dependent reaction via a pantoyl-adenylate intermediate. The sequence is that of Pantothenate synthetase from Edwardsiella ictaluri (strain 93-146).